Reading from the N-terminus, the 935-residue chain is Potassium channel AKT1 (935 aa).

Over 1–106 (MARWGAARMA…YDRRYRIWET (106 aa)) the chain is Cytoplasmic. Residues 107 to 127 (FLIVLVVYSAWVSPFEFGFIP) traverse the membrane as a helical segment. Topologically, residues 128–136 (KPTGALATA) are extracellular. A helical membrane pass occupies residues 137–157 (DNVVNAFFAVDIILTFFVAYL). Topologically, residues 158-178 (DKMSYMLEDDPKKIAWRYSTT) are cytoplasmic. The helical transmembrane segment at 179-199 (WLVLDVASTIPSEFARRILPS) threads the bilayer. Topologically, residues 200 to 205 (KLRSYG) are extracellular. The chain crosses the membrane as a helical; Voltage-sensor span at residues 206 to 226 (FFNMLRLWRLRRVSSLFSRLE). The Cytoplasmic portion of the chain corresponds to 227-240 (KDRHFNYFWVRCAK). Residues 241 to 261 (LICVTLFAVHCAACFYYLLAD) form a helical membrane-spanning segment. Residues 262-288 (RYPVPTSTWIGNYMADFHERSLWIRYV) are Extracellular-facing. The pore-forming intramembrane region spans 289 to 308 (TSVYWSITTLTTVGYGDLHA). The Extracellular segment spans residues 309-312 (ENTR). Residues 313 to 333 (EMIFNIFYMLFNLGLTAYLIG) form a helical membrane-spanning segment. Residues 334-935 (NMTNLVVHGT…WDAEKMKGKS (602 aa)) lie on the Cytoplasmic side of the membrane. Residue 419 to 538 (LFQGVSNDLI…TIIMNNLIQF (120 aa)) coordinates a nucleoside 3',5'-cyclic phosphate. ANK repeat units lie at residues 565–594 (DLPI…DPNE), 598–627 (DGHT…DPNA), 631–660 (EGKV…DLSS), 662–691 (DTGL…DVNR), 695–724 (DGTT…DIDK), and 728–757 (NGWT…ATAS). The tract at residues 826 to 854 (SQAQRETDHPLSRGGLAATGSPNPSSGSR) is disordered. Residues 845–854 (GSPNPSSGSR) show a composition bias toward polar residues. Positions 859 to 935 (RVTISCPEKG…WDAEKMKGKS (77 aa)) constitute a KHA domain.

The protein belongs to the potassium channel family. Plant (TC 1.A.1.4) subfamily. In terms of assembly, the potassium channel is probably a homo- or heterotetrameric complex of pore-forming subunits. In terms of tissue distribution, expressed in roots and coleoptile of young seedlings.

Its subcellular location is the membrane. Highly selective inward-rectifying potassium channel that mediates potassium uptake by plant roots. Assuming opened or closed conformations in response to the voltage difference across the membrane, the channel is activated by hyperpolarization. May be a major salt-sensitive potassium channel in roots. The protein is Potassium channel AKT1 (AKT1) of Oryza sativa subsp. japonica (Rice).